The primary structure comprises 326 residues: N-acetyl-gamma-glutamyl-phosphate reductase (326 aa).

Cys155 is an active-site residue.

It belongs to the NAGSA dehydrogenase family. Type 1 subfamily.

The protein localises to the cytoplasm. The catalysed reaction is N-acetyl-L-glutamate 5-semialdehyde + phosphate + NADP(+) = N-acetyl-L-glutamyl 5-phosphate + NADPH + H(+). The protein operates within amino-acid biosynthesis; L-arginine biosynthesis; N(2)-acetyl-L-ornithine from L-glutamate: step 3/4. Catalyzes the NADPH-dependent reduction of N-acetyl-5-glutamyl phosphate to yield N-acetyl-L-glutamate 5-semialdehyde. The sequence is that of N-acetyl-gamma-glutamyl-phosphate reductase from Shewanella loihica (strain ATCC BAA-1088 / PV-4).